The following is a 547-amino-acid chain: Inactive delta-guaiene synthase (547 aa).

Residues Asp299, Asp303, and Asp444 each contribute to the Mg(2+) site. The DDXXD motif signature appears at 299–303 (DDTYD).

The protein belongs to the terpene synthase family. Mg(2+) serves as cofactor.

This is Inactive delta-guaiene synthase (C1) from Aquilaria crassna (Eagle wood).